We begin with the raw amino-acid sequence, 231 residues long: Acyl-protein thioesterase 2 (231 aa).

The S-palmitoyl cysteine moiety is linked to residue Cys-2. Ser-82 carries the phosphoserine modification. Residues Ser-122, Asp-176, and His-210 each act as charge relay system in the active site.

It belongs to the AB hydrolase superfamily. AB hydrolase 2 family. Expressed in various breast cancer cell lines.

It localises to the cytoplasm. The enzyme catalyses S-hexadecanoyl-L-cysteinyl-[protein] + H2O = L-cysteinyl-[protein] + hexadecanoate + H(+). The catalysed reaction is prostaglandin E2 1-glyceryl ester + H2O = prostaglandin E2 + glycerol + H(+). It carries out the reaction 1-hexadecanoyl-sn-glycero-3-phosphocholine + H2O = sn-glycerol 3-phosphocholine + hexadecanoate + H(+). It catalyses the reaction 1-octadecanoyl-sn-glycero-3-phosphocholine + H2O = octadecanoate + sn-glycerol 3-phosphocholine + H(+). The enzyme catalyses 1-hexadecanoyl-sn-glycero-3-phosphate + H2O = sn-glycerol 3-phosphate + hexadecanoate + H(+). The catalysed reaction is 1-hexadecanoyl-sn-glycero-3-phospho-L-serine + H2O = sn-glycero-3-phospho-L-serine + hexadecanoate + H(+). Its activity is regulated as follows. Inhibited by compound 1 or (5,5-Dioxido-4H-thieno[3,2-c]thiochromen-2-yl)(4-(4-methoxyphenyl)piperazin-1-yl)methanone. Functionally, acts as an acyl-protein thioesterase hydrolyzing fatty acids from S-acylated cysteine residues in proteins such as trimeric G alpha proteins, GSDMD, GAP43, ZDHHC6 or HRAS. Deacylates GAP43. Mediates depalmitoylation of ZDHHC6. Has lysophospholipase activity. Hydrolyzes prostaglandin glycerol esters (PG-Gs) in the following order prostaglandin D2-glycerol ester (PGD2-G) &gt; prostaglandin E2 glycerol ester (PGE2-G) &gt; prostaglandin F2-alpha-glycerol ester (PGF2-alpha-G). Hydrolyzes 1-arachidonoylglycerol but not 2-arachidonoylglycerol or arachidonoylethanolamide. The polypeptide is Acyl-protein thioesterase 2 (LYPLA2) (Homo sapiens (Human)).